A 420-amino-acid polypeptide reads, in one-letter code: Cell division protein FtsA (420 aa).

Belongs to the FtsA/MreB family. Self-interacts. Interacts with FtsZ.

The protein resides in the cell inner membrane. Its function is as follows. Cell division protein that is involved in the assembly of the Z ring. May serve as a membrane anchor for the Z ring. This chain is Cell division protein FtsA, found in Escherichia coli O157:H7.